We begin with the raw amino-acid sequence, 278 residues long: Small ribosomal subunit biogenesis GTPase RsgA (278 aa).

Positions 62–218 (KNELTRPRVA…ICDTPGFNVI (157 aa)) constitute a CP-type G domain. GTP is bound by residues 112–115 (TKTD) and 162–170 (GQSGVGKSS). 4 residues coordinate Zn(2+): Cys241, Cys246, His248, and Cys254.

This sequence belongs to the TRAFAC class YlqF/YawG GTPase family. RsgA subfamily. Monomer. Associates with 30S ribosomal subunit, binds 16S rRNA. Requires Zn(2+) as cofactor.

It localises to the cytoplasm. Functionally, one of several proteins that assist in the late maturation steps of the functional core of the 30S ribosomal subunit. Helps release RbfA from mature subunits. May play a role in the assembly of ribosomal proteins into the subunit. Circularly permuted GTPase that catalyzes slow GTP hydrolysis, GTPase activity is stimulated by the 30S ribosomal subunit. In Mycoplasma genitalium (strain ATCC 33530 / DSM 19775 / NCTC 10195 / G37) (Mycoplasmoides genitalium), this protein is Small ribosomal subunit biogenesis GTPase RsgA.